A 451-amino-acid chain; its full sequence is Tubulin gamma-2 chain (451 aa).

A Phosphoserine; by BRSK1 modification is found at serine 131. 142–148 (AGGTGSG) is a GTP binding site.

The protein belongs to the tubulin family. In terms of assembly, component of the gamma-tubulin ring complex (gTuRC) consisting of TUBGCP2, TUBGCP3, TUBGCP4, TUBGCP5 and TUBGCP6 and gamma-tubulin TUBG1 or TUBG2. TUBGCP2, TUBGCP3, TUBGCP4, TUBGCP5 and TUBGCP6 assemble in a 5:5:2:1:1 stoichiometry; each is associated with a gamma-tubulin, thereby arranging 14 gamma-tubulins in a helical manner. Gamma-tubulin at the first position is blocked by TUBGCP3 at the last position, allowing 13 protafilaments to grow into a microtubule. Interacts with alpha-beta tubulin heterodimers; the interaction allows microtubules to nucleate from the gTuRC. In terms of processing, phosphorylation at Ser-131 by BRSK1 regulates centrosome duplication, possibly by mediating relocation of gamma-tubulin and its associated proteins from the cytoplasm to the centrosome.

The protein resides in the cytoplasm. It is found in the cytoskeleton. The protein localises to the microtubule organizing center. Its subcellular location is the centrosome. Tubulin is the major constituent of microtubules, protein filaments consisting of alpha- and beta-tubulin heterodimers. Gamma-tubulin is a key component of the gamma-tubulin ring complex (gTuRC) which mediates microtubule nucleation. The gTuRC regulates the minus-end nucleation of alpha-beta tubulin heterodimers that grow into microtubule protafilaments, a critical step in centrosome duplication and spindle formation. The sequence is that of Tubulin gamma-2 chain (TUBG2) from Bos taurus (Bovine).